The chain runs to 1121 residues: MQSTVPIAIASNGNKRDVVQNVSAGDEGDILQRLARNREMISTSLSPQKSSGFSGRRRSSSVRDALSSFFGTGNSPTSSMDDYSNLMNRNYSTASTAMCRGNSFPSDVGTKAYNITGSYQPDRHRNSVPYTTIDQLHTRQDTGLRRESDPVAAKQISSNNDIVRSFITHHASNSTMFINRVLSDYLADRGFIKQTPLYNKKSVLEISIATSAESVFLPTTKSDETEYLSLIHGSLNQARTQPVGSTNTAESDFLPSCPTMDTLNENNDLSLFPLHTQRTSPSNTARTGNAMDTSNSDRASPASNNNTTDADSFVASGNNNPMNNNNSPARNRHPNSHSRSLPNAWNSQMPSFSFALIFSLNKSTTLSDIKVELTSNVRVVWFNGLPPTKNVNEECYNIGSLDWTLNADNFNLFIPQGAKSPLDIVENHSNNRKLKVLQKLSMRKRRSFSNKAVLRENILNNLNASNSTNKLNAGVYVFTIPIVLASRIPESLYYPSARVSYSLRLATKLKDEHTQLVASRPRSSSISSPQKLRSYSCSDSYEYSQIDDTIEGETYNNDKNSTGKIAFPSSWLKSAKGRLKRNNSNGRSDNNGASSSGLAMQHDSEDTINLQYPLNLVRTPPEISVTTANKPLYINKVWENCLSYEISFAQKYVPLNGEIPITIKVAPLVKSLSVKRIRVSCREKISYRSKDYQYDFDQLDPLASDPCNPYHMRYLVRKKKDRSLPLFEVASKCTSGPSIREEVVTNTVDDNLLAYTSSKENNKDIPFSESFTVKTKLKFPKYCEVDATKAASLPPYGIDLFDPIKDPTQSENTSNNGNVLGFLVGRPNRASKTVHKIPQDKNHNEVNDTNGNSNTSLQTSSNVPIQHYTRLNKPRRGLYLDSMHFKNIQCSHKLEIVLRVSKTDSGSSKIIRHYEVIVDTPIYLISDLCNTSNIDLPTYDMATTESSKVLPPTFEEATSVSASPRSSVSYYPDDISMQQLNLSRSTSLANGYLSTLHPKTTAVSDSSNGAPIRDQQEQQARPLRTEDYALQMGNENNAYSNMDGLLSQDIFEQETAATLFKRDIVTMNFNNNIFTPRYSPRTFTNTDYNYNDNDNNDNDTEGPGPIIHPGPEPPRYDEISS.

A phosphoserine mark is found at Ser23, Ser46, and Ser127. 4 disordered regions span residues 273-342, 513-532, 579-600, and 837-860; these read PLHT…RSLP, HTQL…PQKL, LKRN…GLAM, and IPQD…LQTS. Polar residues predominate over residues 276 to 310; the sequence is TQRTSPSNTARTGNAMDTSNSDRASPASNNNTTDA. 3 stretches are compositionally biased toward low complexity: residues 318–329, 519–529, and 582–597; these read NNNPMNNNNSPA, SRPRSSSISSP, and NNSN…SSSG. Ser327 carries the post-translational modification Phosphoserine. A compositionally biased stretch (basic and acidic residues) spans 837-846; it reads IPQDKNHNEV. Lys841 is covalently cross-linked (Glycyl lysine isopeptide (Lys-Gly) (interchain with G-Cter in ubiquitin)). A compositionally biased stretch (polar residues) spans 847-860; the sequence is NDTNGNSNTSLQTS. Phosphoserine is present on Ser987. Residues 999–1009 show a composition bias toward polar residues; it reads KTTAVSDSSNG. Disordered regions lie at residues 999 to 1022 and 1075 to 1121; these read KTTA…QARP and TPRY…EISS. Residues 1084–1093 show a composition bias toward low complexity; sequence TNTDYNYNDN.

It belongs to the CSR2 family. Phosphorylated by CDC28.

The protein resides in the cytoplasm. It is found in the nucleus. Transcription factor involved in the regulation of fermentation and aerobic oxidation. Acts as a repressor of CYC1, which is involved in electron flow through the mitochondria under aerobic condition. Required for pseudohyphal formation upon nitrogen starvation. May be involved in viability at stationary phase and aging. This Saccharomyces cerevisiae (strain ATCC 204508 / S288c) (Baker's yeast) protein is Transcription factor CSR2 (CSR2).